The chain runs to 154 residues: MSPAKVDTTKKADPKAKALKAAKAVKSGQAFKKKDKKIRTKVTFHRPKTLTKPRTGKYPKISATPRNKLDHYQILKYPLTTESAMKKIEDNNTLVFIVDIRADKKKIKDAVKKMYDIQTKKVNTLIRPDGTKKAYVRLTPDYDALDVANKIGII.

This sequence belongs to the universal ribosomal protein uL23 family.

Binds to a specific region on the 26S rRNA. This chain is Large ribosomal subunit protein uL23z (RPL23AA), found in Arabidopsis thaliana (Mouse-ear cress).